A 739-amino-acid chain; its full sequence is Phosphoribosylformylglycinamidine synthase subunit PurL (739 aa).

The active site involves His-52. 2 residues coordinate ATP: Tyr-55 and Lys-94. Glu-96 serves as a coordination point for Mg(2+). Substrate contacts are provided by residues 97 to 100 and Arg-119; that span reads SHNH. His-98 serves as the catalytic Proton acceptor. Residue Asp-120 coordinates Mg(2+). Gln-243 provides a ligand contact to substrate. Residue Asp-273 participates in Mg(2+) binding. 317 to 319 is a substrate binding site; sequence ESQ. Positions 500 and 537 each coordinate ATP. A Mg(2+)-binding site is contributed by Asn-538. Position 540 (Ser-540) interacts with substrate.

This sequence belongs to the FGAMS family. As to quaternary structure, monomer. Part of the FGAM synthase complex composed of 1 PurL, 1 PurQ and 2 PurS subunits.

The protein localises to the cytoplasm. The catalysed reaction is N(2)-formyl-N(1)-(5-phospho-beta-D-ribosyl)glycinamide + L-glutamine + ATP + H2O = 2-formamido-N(1)-(5-O-phospho-beta-D-ribosyl)acetamidine + L-glutamate + ADP + phosphate + H(+). It participates in purine metabolism; IMP biosynthesis via de novo pathway; 5-amino-1-(5-phospho-D-ribosyl)imidazole from N(2)-formyl-N(1)-(5-phospho-D-ribosyl)glycinamide: step 1/2. In terms of biological role, part of the phosphoribosylformylglycinamidine synthase complex involved in the purines biosynthetic pathway. Catalyzes the ATP-dependent conversion of formylglycinamide ribonucleotide (FGAR) and glutamine to yield formylglycinamidine ribonucleotide (FGAM) and glutamate. The FGAM synthase complex is composed of three subunits. PurQ produces an ammonia molecule by converting glutamine to glutamate. PurL transfers the ammonia molecule to FGAR to form FGAM in an ATP-dependent manner. PurS interacts with PurQ and PurL and is thought to assist in the transfer of the ammonia molecule from PurQ to PurL. The protein is Phosphoribosylformylglycinamidine synthase subunit PurL of Enterococcus faecalis (strain ATCC 700802 / V583).